The following is a 363-amino-acid chain: Galactokinase (363 aa).

Residue 16-19 (EHTD) participates in substrate binding. Residues Ser-50 and 103 to 109 (GSGLSSS) contribute to the ATP site. Positions 109 and 141 each coordinate Mg(2+). Catalysis depends on Asp-153, which acts as the Proton acceptor. Position 205 (Tyr-205) interacts with substrate.

This sequence belongs to the GHMP kinase family. GalK subfamily.

It localises to the cytoplasm. It catalyses the reaction alpha-D-galactose + ATP = alpha-D-galactose 1-phosphate + ADP + H(+). The protein operates within carbohydrate metabolism; galactose metabolism. Catalyzes the transfer of the gamma-phosphate of ATP to D-galactose to form alpha-D-galactose-1-phosphate (Gal-1-P). This Mycobacterium tuberculosis (strain ATCC 25177 / H37Ra) protein is Galactokinase.